Reading from the N-terminus, the 126-residue chain is Small ribosomal subunit protein uS13 (126 aa).

The disordered stretch occupies residues 94-126; the sequence is GLPVRGQKTRNNAHTVKGKPKAAIAGKKKNKVN. Residues 109 to 126 show a composition bias toward basic residues; the sequence is VKGKPKAAIAGKKKNKVN.

The protein belongs to the universal ribosomal protein uS13 family. As to quaternary structure, part of the 30S ribosomal subunit. Forms a loose heterodimer with protein S19. Forms two bridges to the 50S subunit in the 70S ribosome.

Located at the top of the head of the 30S subunit, it contacts several helices of the 16S rRNA. In the 70S ribosome it contacts the 23S rRNA (bridge B1a) and protein L5 of the 50S subunit (bridge B1b), connecting the 2 subunits; these bridges are implicated in subunit movement. Contacts the tRNAs in the A and P-sites. The sequence is that of Small ribosomal subunit protein uS13 from Aster yellows witches'-broom phytoplasma (strain AYWB).